A 314-amino-acid chain; its full sequence is tRNA dimethylallyltransferase (314 aa).

12-19 provides a ligand contact to ATP; the sequence is GPTGTGKS. 14–19 contributes to the substrate binding site; sequence TGTGKS.

This sequence belongs to the IPP transferase family. In terms of assembly, monomer. Requires Mg(2+) as cofactor.

The enzyme catalyses adenosine(37) in tRNA + dimethylallyl diphosphate = N(6)-dimethylallyladenosine(37) in tRNA + diphosphate. In terms of biological role, catalyzes the transfer of a dimethylallyl group onto the adenine at position 37 in tRNAs that read codons beginning with uridine, leading to the formation of N6-(dimethylallyl)adenosine (i(6)A). This is tRNA dimethylallyltransferase from Mycolicibacterium paratuberculosis (strain ATCC BAA-968 / K-10) (Mycobacterium paratuberculosis).